We begin with the raw amino-acid sequence, 105 residues long: Large ribosomal subunit protein uL24 (105 aa).

The interval 40-61 (RIKKHTPQSANERGASSGGIVT) is disordered.

The protein belongs to the universal ribosomal protein uL24 family. In terms of assembly, part of the 50S ribosomal subunit.

Its function is as follows. One of two assembly initiator proteins, it binds directly to the 5'-end of the 23S rRNA, where it nucleates assembly of the 50S subunit. Functionally, one of the proteins that surrounds the polypeptide exit tunnel on the outside of the subunit. The polypeptide is Large ribosomal subunit protein uL24 (Mycobacteroides abscessus (strain ATCC 19977 / DSM 44196 / CCUG 20993 / CIP 104536 / JCM 13569 / NCTC 13031 / TMC 1543 / L948) (Mycobacterium abscessus)).